The sequence spans 246 residues: Probable transcriptional regulatory protein CLD_1467 (246 aa).

Belongs to the TACO1 family.

It is found in the cytoplasm. This Clostridium botulinum (strain Okra / Type B1) protein is Probable transcriptional regulatory protein CLD_1467.